A 347-amino-acid chain; its full sequence is 4-hydroxy-2-oxovalerate aldolase (347 aa).

In terms of domain architecture, Pyruvate carboxyltransferase spans 2-252 (ILISDATLRD…DTRTTFERVM (251 aa)). 10–11 (RD) serves as a coordination point for substrate. Asp11 provides a ligand contact to Mn(2+). His14 acts as the Proton acceptor in catalysis. 2 residues coordinate substrate: Ser164 and His191. His191 and His193 together coordinate Mn(2+).

It belongs to the 4-hydroxy-2-oxovalerate aldolase family.

It carries out the reaction (S)-4-hydroxy-2-oxopentanoate = acetaldehyde + pyruvate. The polypeptide is 4-hydroxy-2-oxovalerate aldolase (mhpE) (Burkholderia pseudomallei (strain K96243)).